The primary structure comprises 104 residues: L-rhamnose mutarotase (104 aa).

Residue Tyr-18 coordinates substrate. His-22 (proton donor) is an active-site residue. Substrate is bound by residues Tyr-41 and 76-77 (WW).

It belongs to the rhamnose mutarotase family. As to quaternary structure, homodimer.

It is found in the cytoplasm. The enzyme catalyses alpha-L-rhamnose = beta-L-rhamnose. Its pathway is carbohydrate metabolism; L-rhamnose metabolism. Functionally, involved in the anomeric conversion of L-rhamnose. The polypeptide is L-rhamnose mutarotase (Shigella dysenteriae serotype 1 (strain Sd197)).